A 124-amino-acid chain; its full sequence is QEGDPEAGAKAFNQCQTCHVIVDDSGTTIAGRNAKTGPNLYGVVGRTAGTQADFKGYGEGMKEAGAKGLAWDEEHFVQYVQDPTKFLKEYTGDAKAKGKMTFKLKKEADAHNIWAYLQQVAVRP.

Gln1 is modified (pyrrolidone carboxylic acid). Heme c-binding residues include Cys15, Cys18, His19, and Met100.

Post-translationally, binds 1 heme c group covalently per subunit.

It localises to the periplasm. Functionally, cytochrome c2 is found mainly in purple, non-sulfur, photosynthetic bacteria where it functions as the electron donor to the oxidized bacteriochlorophyll in the photophosphorylation pathway. However, it may also have a role in the respiratory chain and is found in some non-photosynthetic bacteria. In Cereibacter sphaeroides (Rhodobacter sphaeroides), this protein is Cytochrome c2 (cycA).